We begin with the raw amino-acid sequence, 115 residues long: Con-Ins G1c (115 aa).

A signal peptide spans 1–24 (MTTSFYFLLMALGLLLYVCQSSFG). Residues 25 to 29 (NQHTR) constitute a propeptide that is removed on maturation. Pro-34 carries the post-translational modification 4-hydroxyproline; partial. Intrachain disulfides connect Cys-38–Cys-101, Cys-50–Cys-114, and Cys-100–Cys-105. The residue at position 41 (Glu-41) is a 4-carboxyglutamate. Positions 53 to 94 (KRNDAGKKRGRASPLWQRRGSLSQLKARAKRNGAFHLPRDGR) are cleaved as a propeptide — c peptide. Position 98 is a 4-carboxyglutamate (Glu-98). Residue Pro-104 is modified to 4-hydroxyproline; partial. 4-carboxyglutamate; partial is present on Glu-109.

This sequence belongs to the insulin family. Heterodimer of A and B chains; disulfide-linked. Post-translationally, is different from Con-Ins G1a (AC A0A0B5AC95) due to absence of amidation at Cys-114. Expressed by the venom gland.

The protein localises to the secreted. In terms of biological role, this venom insulin, from a fish-hunting cone snail, facilitates prey capture by rapidly inducing hypoglycemic shock. It is one of the smallest known insulin found in nature and lacks the C-terminal segment of the B chain that, in human insulin, mediates engagement of the insulin receptor (INSR) and assembly of the hormone's hexameric storage form. Despite lacking this segment, it both binds and activates human insulin receptor (long isoform (HIR-B)) with only a 10-fold lower potency. In vivo, intraperitoneal injection of this peptide into zebrafish lowers blood glucose with the same potency than human insulin. In addition, when applied to water, this peptide reduces overall locomotor activity of zebrafish larvae, observed as a significant decrease in the percentage of time spent swimming and movement frequency. In Conus geographus (Geography cone), this protein is Con-Ins G1c.